We begin with the raw amino-acid sequence, 682 residues long: Cyclic nucleotide-gated cation channel (682 aa).

Positions 1–41 are disordered; the sequence is MTGQAALERSVSSHRLSVRSRLEGEAERAESAISRTDGDDD. Residues 1–136 are Cytoplasmic-facing; that stretch reads MTGQAALERS…EGFVVSQSDD (136 aa). Basic and acidic residues predominate over residues 20 to 30; the sequence is SRLEGEAERAE. Residues 137–157 form a helical membrane-spanning segment; sequence IYYYWLFFIALASLYNWIMLV. The Extracellular portion of the chain corresponds to 158-169; it reads ARACFDQLQDEN. The chain crosses the membrane as a helical span at residues 170–190; sequence FFLWVGLDYLCDVIYILDTCI. Residues 191-218 lie on the Cytoplasmic side of the membrane; that stretch reads RLRTGYLEQGLLVKDLAKLRDNYIRTLQ. Residues 219 to 239 traverse the membrane as a helical segment; that stretch reads FKLDFLSILPTELLFFVTGYV. Residues 240 to 272 are Extracellular-facing; sequence PQLRFNRLLRFSRMFEFFDRTETRTNYPNAFRI. Residues 273-293 traverse the membrane as a helical segment; the sequence is CNLILYILVIIHWNACIYYAI. Topologically, residues 294 to 311 are cytoplasmic; that stretch reads SKALGLSSDTWVYSGQNK. Residues 312–332 form a helical membrane-spanning segment; it reads TLSFCYVYCFYWSTLTLTTIG. The Extracellular segment spans residues 333–343; the sequence is EMPPPVKDEEY. Residues 344–364 traverse the membrane as a helical segment; the sequence is VFVVFDFLVGVLIFATIVGNV. The Cytoplasmic segment spans residues 365–682; sequence GSMIANMNAT…SAETNSEEET (318 aa). Residues 455–577, Glu514, and Arg529 contribute to the 3',5'-cyclic AMP site; that span reads LLVE…QGLL. The tract at residues 649-682 is disordered; sequence GEHAGVPTHTHADIHAQPETHTRTSAETNSEEET. Residues 658 to 672 are compositionally biased toward basic and acidic residues; the sequence is THADIHAQPETHTRT.

This sequence belongs to the cyclic nucleotide-gated cation channel (TC 1.A.1.5) family. Olfactory neurons.

It localises to the membrane. Functionally, this cyclic nucleotide-gated channel is activated equally well by both cAMP and cGMP. This chain is Cyclic nucleotide-gated cation channel, found in Ictalurus punctatus (Channel catfish).